The chain runs to 64 residues: Alpha-conotoxin-like Lt1.3 (64 aa).

A signal peptide spans methionine 1–serine 21. Residues phenylalanine 22 to aspartate 45 constitute a propeptide that is removed on maturation. 2 disulfide bridges follow: cysteine 47–cysteine 53 and cysteine 48–cysteine 61. The tract at residues aspartate 49 to proline 51 is lacks the Ser-Xaa-Pro motif that is crucial for potent interaction with nAChR.

It belongs to the conotoxin A superfamily. As to expression, expressed by the venom duct.

The protein resides in the secreted. Alpha-conotoxins act on postsynaptic membranes, they bind to the nicotinic acetylcholine receptors (nAChR) and thus inhibit them. Has possibly a distinct nAChR binding mode from other alpha-conotoxins, due to a different three residue motif (lacks the Ser-Xaa-Pro motif). This Conus litteratus (Lettered cone) protein is Alpha-conotoxin-like Lt1.3.